Reading from the N-terminus, the 474-residue chain is Synaptotagmin-17 (474 aa).

Residues 60-112 (WLMASRSSDKDGDSVHTASEVPLTPRTNSPDGRRSSSDTSKSTYSLTRRISSL) are disordered. A compositionally biased stretch (low complexity) spans 96–112 (SDTSKSTYSLTRRISSL). Residues Ser-118 and Ser-119 each carry the phosphoserine modification. 2 C2 domains span residues 184–310 (QLGM…HWWK) and 321–455 (ELGE…EQWH).

This sequence belongs to the synaptotagmin family. In terms of tissue distribution, expressed abundantly in brain (frontal and temporal lobes, hippocampus, hypothalamus, amygdala, substantia nigra, and pituitary), kidney, and prostate. Expressed in fetal brain, kidney and lung. Expressed in melanocytes.

The protein resides in the membrane. In terms of biological role, plays a role in dendrite formation by melanocytes. The polypeptide is Synaptotagmin-17 (SYT17) (Homo sapiens (Human)).